Consider the following 202-residue polypeptide: Glycerol-3-phosphate acyltransferase (202 aa).

6 helical membrane passes run 3-23, 61-81, 87-107, 118-138, 144-164, and 167-187; these read NLII…LILA, IATI…LKFL, LLWS…YLLF, GAMI…WVVI, ISSL…FIFN, and LEIH…YKHL.

Belongs to the PlsY family. In terms of assembly, probably interacts with PlsX.

It localises to the cell inner membrane. It catalyses the reaction an acyl phosphate + sn-glycerol 3-phosphate = a 1-acyl-sn-glycero-3-phosphate + phosphate. It participates in lipid metabolism; phospholipid metabolism. In terms of biological role, catalyzes the transfer of an acyl group from acyl-phosphate (acyl-PO(4)) to glycerol-3-phosphate (G3P) to form lysophosphatidic acid (LPA). This enzyme utilizes acyl-phosphate as fatty acyl donor, but not acyl-CoA or acyl-ACP. This is Glycerol-3-phosphate acyltransferase from Campylobacter jejuni subsp. jejuni serotype O:23/36 (strain 81-176).